A 403-amino-acid polypeptide reads, in one-letter code: Phosphoglycerate kinase (403 aa).

Residues 21–23 (DFN), arginine 37, 60–63 (HLGR), arginine 125, and arginine 158 each bind substrate. ATP contacts are provided by residues lysine 209, glutamate 332, and 359-362 (GGDS).

The protein belongs to the phosphoglycerate kinase family. In terms of assembly, monomer.

The protein resides in the cytoplasm. The catalysed reaction is (2R)-3-phosphoglycerate + ATP = (2R)-3-phospho-glyceroyl phosphate + ADP. The protein operates within carbohydrate degradation; glycolysis; pyruvate from D-glyceraldehyde 3-phosphate: step 2/5. This chain is Phosphoglycerate kinase, found in Koribacter versatilis (strain Ellin345).